The chain runs to 762 residues: MEFEQEYTAEEALNIEKEFTRLKGKHYMDHAGTTLYAESQIRAVHDMLAQNLFCNPHSSPLTGKLLQQVRHRLLRFFNTSPSDYSLVFTSGATASLKLVAESFRFRPPDEPESSPDEGAFVYLRDNHTSVLGMRSVVGTERIDPLEPEELLRHLKVSARCSGGTKPSLLVFPAQNNFNAAKYPLDLVEEIQQNGLSGYDDERFYVCLDAASYVSTNFLDLGRYRPDFVCMSFYKIFGYPTGLGALLIRNGSEDVLDKKYYGGGTIKIMLSGQNLHLKHDDLVTRFEDGTQPFLSIISLLEGMNTIQRLIPAANGYRPMERISKHVFSLAKYCYRKLGTLQHANGKKAILFYSDTRYETRDRQGGIVTFNVLKDDGSHLGFSEFAKFAGQHQIYVRTGCFCNAGSCQKHLGLTDEDILMFYEMGKVCGDDTDMIEGRPTGTVRVSFGYMNKKEDVNRLVDMINDCFVSKAVSNVAMVSPIRNVIKNEGIALKAIYLYPIRSCGGYRITAAWPLTERGLKYDREFTIVDSNGNPLMRNKHAEMSTIHPKIDPSLNFLILTHPFMEDLILKIRKLPTEFNDGESIDLGDAAAAWISKALRMPKLRLLRTSATDRKPPHKLLMINWDAMKTLSDDEGVESDATMSWLVDHFRGSLIVEGKAEEDLQGWKEVKIGKKRFKVQANCSRCPMIHVDQSGEAIPADSLKAIANVFTKKIPLGVHLTAVDEGFPEGVLECGSILEPVRQSDSPKAHIIKDSVSTRYNFLVK.

Lysine 234 carries the N6-(pyridoxal phosphate)lysine modification. Cysteine 400 is a catalytic residue. Positions 590–738 (AWISKALRMP…LECGSILEPV (149 aa)) constitute an MOSC domain.

This sequence belongs to the class-V pyridoxal-phosphate-dependent aminotransferase family. MOCOS subfamily. Pyridoxal 5'-phosphate serves as cofactor.

It catalyses the reaction Mo-molybdopterin + L-cysteine + AH2 = thio-Mo-molybdopterin + L-alanine + A + H2O. Its function is as follows. Sulfurates the molybdenum cofactor. Sulfation of molybdenum is essential for xanthine dehydrogenase (XDH) and aldehyde oxidase (ADO) enzymes in which molybdenum cofactor is liganded by 1 oxygen and 1 sulfur atom in active form. This chain is Molybdenum cofactor sulfurase 2, found in Aedes aegypti (Yellowfever mosquito).